We begin with the raw amino-acid sequence, 61 residues long: Large ribosomal subunit protein uL29 (61 aa).

Belongs to the universal ribosomal protein uL29 family.

This is Large ribosomal subunit protein uL29 from Stenotrophomonas maltophilia (strain K279a).